A 518-amino-acid polypeptide reads, in one-letter code: Endoglucanase 18 (518 aa).

Over Met1–Gly35 the chain is Cytoplasmic. A helical membrane pass occupies residues Val36–Val56. Residues Ala57–Ser518 are Extracellular-facing. Asn71 is a glycosylation site (N-linked (GlcNAc...) asparagine). The active-site Nucleophile is Asp101. N-linked (GlcNAc...) asparagine glycosylation is found at Asn214, Asn251, and Asn272. His436 is a catalytic residue. Asn477 carries N-linked (GlcNAc...) asparagine glycosylation. Residues Asp482 and Glu491 contribute to the active site.

The protein belongs to the glycosyl hydrolase 9 (cellulase E) family.

It is found in the membrane. The enzyme catalyses Endohydrolysis of (1-&gt;4)-beta-D-glucosidic linkages in cellulose, lichenin and cereal beta-D-glucans.. This is Endoglucanase 18 from Oryza sativa subsp. japonica (Rice).